The chain runs to 67 residues: ATP synthase F(0) complex subunit 8 (67 aa).

Residues 8 to 24 (TWLIMISSMILTLFITF) traverse the membrane as a helical segment. At Lys54 the chain carries N6-acetyllysine; alternate. Position 54 is an N6-succinyllysine; alternate (Lys54). Residue Lys57 is modified to N6-acetyllysine.

Belongs to the ATPase protein 8 family. In terms of assembly, component of the ATP synthase complex composed at least of ATP5F1A/subunit alpha, ATP5F1B/subunit beta, ATP5MC1/subunit c (homooctomer), MT-ATP6/subunit a, MT-ATP8/subunit 8, ATP5ME/subunit e, ATP5MF/subunit f, ATP5MG/subunit g, ATP5MK/subunit k, ATP5MJ/subunit j, ATP5F1C/subunit gamma, ATP5F1D/subunit delta, ATP5F1E/subunit epsilon, ATP5PF/subunit F6, ATP5PB/subunit b, ATP5PD/subunit d, ATP5PO/subunit OSCP. ATP synthase complex consists of a soluble F(1) head domain (subunits alpha(3) and beta(3)) - the catalytic core - and a membrane F(0) domain - the membrane proton channel (subunits c, a, 8, e, f, g, k and j). These two domains are linked by a central stalk (subunits gamma, delta, and epsilon) rotating inside the F1 region and a stationary peripheral stalk (subunits F6, b, d, and OSCP). Interacts with PRICKLE3.

The protein resides in the mitochondrion membrane. Its function is as follows. Subunit 8, of the mitochondrial membrane ATP synthase complex (F(1)F(0) ATP synthase or Complex V) that produces ATP from ADP in the presence of a proton gradient across the membrane which is generated by electron transport complexes of the respiratory chain. ATP synthase complex consist of a soluble F(1) head domain - the catalytic core - and a membrane F(1) domain - the membrane proton channel. These two domains are linked by a central stalk rotating inside the F(1) region and a stationary peripheral stalk. During catalysis, ATP synthesis in the catalytic domain of F(1) is coupled via a rotary mechanism of the central stalk subunits to proton translocation. In vivo, can only synthesize ATP although its ATP hydrolase activity can be activated artificially in vitro. Part of the complex F(0) domain. The sequence is that of ATP synthase F(0) complex subunit 8 from Halichoerus grypus (Gray seal).